The chain runs to 248 residues: Coenzyme F420:L-glutamate ligase (248 aa).

GTP is bound by residues 15 to 18 (IPLI), 45 to 46 (ET), and Lys-50. Asp-115 contributes to the a divalent metal cation binding site. Asn-118 lines the GTP pocket. Residues Asp-155, Ser-156, and Gln-213 each contribute to the a divalent metal cation site. Position 211-218 (211-218 (MGQSDEGI)) interacts with GTP.

This sequence belongs to the CofE family. In terms of assembly, homodimer. It depends on Mg(2+) as a cofactor. Requires Mn(2+) as cofactor. K(+) is required as a cofactor.

The catalysed reaction is oxidized coenzyme F420-0 + GTP + L-glutamate = oxidized coenzyme F420-1 + GDP + phosphate + H(+). It carries out the reaction oxidized coenzyme F420-1 + GTP + L-glutamate = oxidized coenzyme F420-2 + GDP + phosphate + H(+). It functions in the pathway cofactor biosynthesis; coenzyme F420 biosynthesis. Catalyzes the GTP-dependent successive addition of two or more gamma-linked L-glutamates to the L-lactyl phosphodiester of 7,8-didemethyl-8-hydroxy-5-deazariboflavin (F420-0) to form coenzyme F420-0-glutamyl-glutamate (F420-2) or polyglutamated F420 derivatives. The protein is Coenzyme F420:L-glutamate ligase of Methanococcus maripaludis (strain C6 / ATCC BAA-1332).